We begin with the raw amino-acid sequence, 289 residues long: Urease accessory protein UreD (289 aa).

This sequence belongs to the UreD family. UreD, UreF and UreG form a complex that acts as a GTP-hydrolysis-dependent molecular chaperone, activating the urease apoprotein by helping to assemble the nickel containing metallocenter of UreC. The UreE protein probably delivers the nickel.

It localises to the cytoplasm. Required for maturation of urease via the functional incorporation of the urease nickel metallocenter. This chain is Urease accessory protein UreD, found in Cupriavidus necator (strain ATCC 17699 / DSM 428 / KCTC 22496 / NCIMB 10442 / H16 / Stanier 337) (Ralstonia eutropha).